We begin with the raw amino-acid sequence, 505 residues long: MEELQGYLEIDGFRQHHFLYPLLLQEYIYALAHDHGLNGSILSEHMENLSHDNKSSSLIVKRLITRMHQQNHFIISVNDSNQKGFVGHNKNFHSQKISEGFAVIVEIPFSLQLVSSLEEKEIAKFHNSRSIHSIFPFFEDKLSHLNHVSDILIPYPIHLEILVQTLRCWIQDAPSLHLLRFFLHEYWNSNSLITPKKSISFFSKENQRLFLFLYNSHVYECESVFIFLRKQSSHLRSTSFGSFLERTHFYGKIEHLVVVLGNDFPKTLWLFKDPFVHYVRYQGKSILASRGTQFLIKKWKYHLVNFWQCHFYLWSQPDRIHLNQLCNHSFYFLGYLSSVQLNSSVVRSQMLENAFRMDTAIKKFETIVPIIPLIGSLAKAKFCNGSGHPISKPFRTDLSDSEIINRFGRICKNLSHYHSGSSKKQSLYRIKFILRLSCARTLSRKHKSTVRAFLKRLGSELLEEFLTEEEQVLSLLFPRTPSHRPHRERIWYLDIICINDLANHE.

The protein belongs to the intron maturase 2 family. MatK subfamily.

The protein localises to the plastid. It localises to the chloroplast. In terms of biological role, usually encoded in the trnK tRNA gene intron. Probably assists in splicing its own and other chloroplast group II introns. This is Maturase K from Calycanthus floridus (Eastern sweetshrub).